A 221-amino-acid polypeptide reads, in one-letter code: Glutathione S-transferase (221 aa).

Methionine 1 bears the N-acetylmethionine mark. Alanine 2 is subject to N-acetylalanine; in Glutathione S-transferase, N-terminally processed. A GST N-terminal domain is found at 3–82 (GEQNIKYFNI…YIAEKYNLLG (80 aa)). Glutathione is bound by residues tyrosine 9, lysine 45, 53-54 (QV), and 66-67 (QT). The GST C-terminal domain maps to 84 to 208 (DMKEHAQIIM…PGSKRKPVPD (125 aa)).

The protein belongs to the GST superfamily. Alpha family. In terms of assembly, homodimer or heterodimer of GSTA1 and GSTA2.

The protein localises to the cytoplasm. It catalyses the reaction RX + glutathione = an S-substituted glutathione + a halide anion + H(+). The enzyme catalyses prostaglandin A2 + glutathione = prostaglandin A2-S-(R)-glutathione. The catalysed reaction is prostaglandin J2 + glutathione = prostaglandin J2-S-(R)-glutathione. It carries out the reaction (13S)-hydroperoxy-(9Z,11E)-octadecadienoate + 2 glutathione = (13S)-hydroxy-(9Z,11E)-octadecadienoate + glutathione disulfide + H2O. It catalyses the reaction androst-5-ene-3,17-dione = androst-4-ene-3,17-dione. Glutathione S-transferase that catalyzes the nucleophilic attack of the sulfur atom of glutathione on the electrophilic groups of a wide range of exogenous and endogenous compounds. Involved in the formation of glutathione conjugates of both prostaglandin A2 (PGA2) and prostaglandin J2 (PGJ2). It also catalyzes the isomerization of D5-androstene-3,17-dione (AD) into D4-androstene-3,17-dione and may therefore play an important role in hormone biosynthesis. Through its glutathione-dependent peroxidase activity toward the fatty acid hydroperoxide (13S)-hydroperoxy-(9Z,11E)-octadecadienoate/13-HPODE it is also involved in the metabolism of oxidized linoleic acid. The sequence is that of Glutathione S-transferase from Antechinus stuartii (Brown marsupial mouse).